Reading from the N-terminus, the 181-residue chain is MNLEEKPTMTASRASPQAEHLYYVRCSICNTILAVGIPLKRMLDTVTVKCGHCGNLSFLTTTPPLQGHVSLTLQMQSFGGSDYKKGSSSSSSSSTSSDQPPSPSPPFVVKPPEKKQRLPSAYNRFMRDEIQRIKSANPEIPHREAFSAAAKNWAKYIPNSPTSITSGGHNMIHGLGFGEKK.

The C4-type zinc-finger motif lies at 26 to 53; that stretch reads CSICNTILAVGIPLKRMLDTVTVKCGHC. A disordered region spans residues 80–122; sequence GSDYKKGSSSSSSSSTSSDQPPSPSPPFVVKPPEKKQRLPSAY. Residues 87–99 are compositionally biased toward low complexity; it reads SSSSSSSSTSSDQ. Positions 100–109 are enriched in pro residues; the sequence is PPSPSPPFVV.

This sequence belongs to the YABBY family. As to expression, restricted to flowers, mostly in carpels and nectaries. Expressed at low levels in sepal primordia (buds), sepal receptacle and developing petal. Not detected in placental tissues, septum, stigma and ovules.

It localises to the nucleus. In terms of biological role, transcription factor required for the initiation of nectary development. Also involved in suppressing early radial growth of the gynoecium, in promoting its later elongation and in fusion of its carpels by regulating both cell division and expansion. Establishes the polar differentiation in the carpels by specifying abaxial cell fate in the ovary wall. Regulates both cell division and expansion. This is Protein CRABS CLAW from Arabidopsis thaliana (Mouse-ear cress).